The following is a 390-amino-acid chain: Chorismate synthase 1 (390 aa).

Residues R39 and R45 each coordinate NADP(+). The interval 95–117 (EQEEKEMKRKVTKPRPGHADLNG) is disordered. FMN is bound by residues 132–134 (RSS), 253–254 (NA), G298, 313–317 (KPIPT), and R339.

This sequence belongs to the chorismate synthase family. Homotetramer. Requires FMNH2 as cofactor.

The catalysed reaction is 5-O-(1-carboxyvinyl)-3-phosphoshikimate = chorismate + phosphate. Its pathway is metabolic intermediate biosynthesis; chorismate biosynthesis; chorismate from D-erythrose 4-phosphate and phosphoenolpyruvate: step 7/7. Catalyzes the anti-1,4-elimination of the C-3 phosphate and the C-6 proR hydrogen from 5-enolpyruvylshikimate-3-phosphate (EPSP) to yield chorismate, which is the branch point compound that serves as the starting substrate for the three terminal pathways of aromatic amino acid biosynthesis. This reaction introduces a second double bond into the aromatic ring system. The polypeptide is Chorismate synthase 1 (Bacillus cereus (strain ATCC 10987 / NRS 248)).